Consider the following 425-residue polypeptide: Glutamate-1-semialdehyde 2,1-aminomutase (425 aa).

Lys264 carries the N6-(pyridoxal phosphate)lysine modification.

It belongs to the class-III pyridoxal-phosphate-dependent aminotransferase family. HemL subfamily. Homodimer. It depends on pyridoxal 5'-phosphate as a cofactor.

Its subcellular location is the cytoplasm. The enzyme catalyses (S)-4-amino-5-oxopentanoate = 5-aminolevulinate. The protein operates within porphyrin-containing compound metabolism; protoporphyrin-IX biosynthesis; 5-aminolevulinate from L-glutamyl-tRNA(Glu): step 2/2. This is Glutamate-1-semialdehyde 2,1-aminomutase from Hydrogenobaculum sp. (strain Y04AAS1).